Reading from the N-terminus, the 365-residue chain is Protein RecA (365 aa).

Position 73-80 (G73–T80) interacts with ATP.

This sequence belongs to the RecA family.

It is found in the cytoplasm. Can catalyze the hydrolysis of ATP in the presence of single-stranded DNA, the ATP-dependent uptake of single-stranded DNA by duplex DNA, and the ATP-dependent hybridization of homologous single-stranded DNAs. It interacts with LexA causing its activation and leading to its autocatalytic cleavage. This Prochlorococcus marinus (strain MIT 9312) protein is Protein RecA.